The chain runs to 296 residues: Ribosomal protein L11 methyltransferase (296 aa).

S-adenosyl-L-methionine is bound by residues Thr-147, Gly-168, Asp-190, and Asn-232.

This sequence belongs to the methyltransferase superfamily. PrmA family.

It is found in the cytoplasm. It catalyses the reaction L-lysyl-[protein] + 3 S-adenosyl-L-methionine = N(6),N(6),N(6)-trimethyl-L-lysyl-[protein] + 3 S-adenosyl-L-homocysteine + 3 H(+). In terms of biological role, methylates ribosomal protein L11. This chain is Ribosomal protein L11 methyltransferase, found in Marinomonas sp. (strain MWYL1).